Consider the following 247-residue polypeptide: Segregation and condensation protein A (247 aa).

Belongs to the ScpA family. Component of a cohesin-like complex composed of ScpA, ScpB and the Smc homodimer, in which ScpA and ScpB bind to the head domain of Smc. The presence of the three proteins is required for the association of the complex with DNA.

It is found in the cytoplasm. Functionally, participates in chromosomal partition during cell division. May act via the formation of a condensin-like complex containing Smc and ScpB that pull DNA away from mid-cell into both cell halves. In Lactobacillus johnsonii (strain CNCM I-12250 / La1 / NCC 533), this protein is Segregation and condensation protein A.